A 162-amino-acid chain; its full sequence is Putative ethylene-responsive transcription factor ERF121 (162 aa).

Disordered regions lie at residues 1-21 (MDYSENVQNKNFTPISQPPNL), 84-103 (IKQEKKHKGVRKKPSGKWSA), and 139-162 (KRSARRGSKKGEGSIHQEVGGGDD). The segment covering 87–98 (EKKHKGVRKKPS) has biased composition (basic residues). The AP2/ERF DNA-binding region spans 89–146 (KHKGVRKKPSGKWSAEIWDPSTRTRRWLGTFPTAEMAADAYDEAAAALVEKRSARRGS).

This sequence belongs to the AP2/ERF transcription factor family. ERF subfamily.

The protein resides in the nucleus. Probably acts as a transcriptional activator. Binds to the GCC-box pathogenesis-related promoter element. May be involved in the regulation of gene expression by stress factors and by components of stress signal transduction pathways. The polypeptide is Putative ethylene-responsive transcription factor ERF121 (ERF121) (Arabidopsis thaliana (Mouse-ear cress)).